The sequence spans 284 residues: Transcription factor lir-3 (284 aa).

The span at 50 to 60 shows a compositional bias: basic and acidic residues; it reads EPRISRDELRE. Residues 50–71 form a disordered region; sequence EPRISRDELRETASSPVTFETR. A C2H2-type zinc finger spans residues 224-247; that stretch reads YKCKQCDYLDYRKSTMRKHTVSQH.

As to expression, expressed in FLP neurons.

It is found in the nucleus. Its function is as follows. Positively regulates the RNA polymerase III-associated transcription of small non-coding RNAs. The sequence is that of Transcription factor lir-3 from Caenorhabditis elegans.